We begin with the raw amino-acid sequence, 124 residues long: S-adenosylmethionine decarboxylase proenzyme (124 aa).

The active-site Schiff-base intermediate with substrate; via pyruvic acid is S71. S71 is modified (pyruvic acid (Ser); by autocatalysis). H76 (proton acceptor; for processing activity) is an active-site residue. The active-site Proton donor; for catalytic activity is the C91.

This sequence belongs to the prokaryotic AdoMetDC family. Type 1 subfamily. Heterotetramer of two alpha and two beta chains arranged as a dimer of alpha/beta heterodimers. Requires pyruvate as cofactor. Post-translationally, is synthesized initially as an inactive proenzyme. Formation of the active enzyme involves a self-maturation process in which the active site pyruvoyl group is generated from an internal serine residue via an autocatalytic post-translational modification. Two non-identical subunits are generated from the proenzyme in this reaction, and the pyruvate is formed at the N-terminus of the alpha chain, which is derived from the carboxyl end of the proenzyme. The post-translation cleavage follows an unusual pathway, termed non-hydrolytic serinolysis, in which the side chain hydroxyl group of the serine supplies its oxygen atom to form the C-terminus of the beta chain, while the remainder of the serine residue undergoes an oxidative deamination to produce ammonia and the pyruvoyl group blocking the N-terminus of the alpha chain.

The catalysed reaction is S-adenosyl-L-methionine + H(+) = S-adenosyl 3-(methylsulfanyl)propylamine + CO2. It functions in the pathway amine and polyamine biosynthesis; S-adenosylmethioninamine biosynthesis; S-adenosylmethioninamine from S-adenosyl-L-methionine: step 1/1. With respect to regulation, competitively inhibited by methylglyoxal bis-guanylhydrazone. Irreversibly inhibited by NaBH(4) in vitro. Catalyzes the decarboxylation of S-adenosylmethionine to S-adenosylmethioninamine (dcAdoMet), the propylamine donor required for the synthesis of the polyamines spermine and spermidine from the diamine putrescine. Has no arginine decarboxylase (ArgDC) activity. This Saccharolobus solfataricus (strain ATCC 35092 / DSM 1617 / JCM 11322 / P2) (Sulfolobus solfataricus) protein is S-adenosylmethionine decarboxylase proenzyme (speH).